Here is a 205-residue protein sequence, read N- to C-terminus: High frequency lysogenization protein HflD homolog (205 aa).

This sequence belongs to the HflD family.

The protein resides in the cytoplasm. The protein localises to the cell inner membrane. The protein is High frequency lysogenization protein HflD homolog of Hahella chejuensis (strain KCTC 2396).